The sequence spans 227 residues: Homeobox protein HD-10 (227 aa).

The homeobox DNA-binding region spans 30-89; that stretch reads FVKHRKRTTKAQLKVLEETFETNIRPDANMRKKLGEQLGMTPRSVQVWFQNRRAKIKKLT. A disordered region spans residues 88 to 115; that stretch reads LTQKKMMQQENTDNTKGPDAAHGSSSPK. Positions 92-102 are enriched in polar residues; that stretch reads KMMQQENTDNT.

Its subcellular location is the nucleus. The chain is Homeobox protein HD-10 (HD-10) from Encephalitozoon cuniculi (strain GB-M1) (Microsporidian parasite).